The chain runs to 943 residues: Receptor-like kinase TMK3 (943 aa).

The first 24 residues, 1–24, serve as a signal peptide directing secretion; it reads MSNSHLGTLCFIISLLGLANFSLS. Residues 25–482 lie on the Extracellular side of the membrane; sequence QTGLDDSTMQ…ETSKKSSNVK (458 aa). N-linked (GlcNAc...) asparagine glycosylation is present at Asn-41. Cys-54 and Cys-61 are oxidised to a cystine. LRR repeat units follow at residues 64-88, 89-111, 112-134, 136-160, 162-183, 186-210, 212-232, 233-254, 255-279, and 281-301; these read SNRVTKIQLKQKGIRGTLPTNLQSL, SELVILELFLNRISGPIPDLSGL, SRLQTLNLHDNLFTSVPKNLFSG, SSLQEMYLENNPFDPWVIPDTVKEA, SLQNLTLSNCSIIGKIPDFFGS, LPSLTNLKLSQNGLEGELPMSFAGT, IQSLFLNGQKLNGSISVLGNM, TSLVEVSLQGNQFSGPIPDLSG, LVSLRVFNVRENQLTGVVPQSLVSL, and SLTTVNLTNNYLQGPTPLFGK. Asn-165 and Asn-170 each carry an N-linked (GlcNAc...) asparagine glycan. 2 N-linked (GlcNAc...) asparagine glycosylation sites follow: Asn-223 and Asn-231. An N-linked (GlcNAc...) asparagine glycan is attached at Asn-286. 2 disulfide bridges follow: Cys-315–Cys-323 and Cys-353–Cys-361. 3 LRR repeats span residues 363-386, 387-410, and 411-438; these read GGNITVVNMRKQDLSGTISPSLAK, LTSLETINLADNKLSGHIPDELTT, and LSKLRLLDVSNNDFYGIPPKFRDTVTLV. Asn-365 is a glycosylation site (N-linked (GlcNAc...) asparagine). Positions 441 to 476 are disordered; sequence GNANMGKNGPNKTSDAPGASPGSKPSGGSDGSETSK. Residue Asn-451 is glycosylated (N-linked (GlcNAc...) asparagine). Low complexity predominate over residues 454-467; that stretch reads SDAPGASPGSKPSG. A helical transmembrane segment spans residues 483–503; it reads IIVPVVGGVVGALCLVGLGVC. The Cytoplasmic portion of the chain corresponds to 504–943; sequence LYAKKRKRPA…ADSFTSVDGR (440 aa). Residues 514-534 are disordered; sequence RVQSPSSNMVIHPHHSGDNDD. The region spanning 585–866 is the Protein kinase domain; it reads FSEENILGRG…AHIVNVLSSL (282 aa). ATP-binding positions include 591–599 and Lys-613; that span reads LGRGGFGTV. The active-site Proton acceptor is the Asp-714. The tract at residues 904–943 is disordered; that stretch reads QTADDSGSSSSAYGSKDNTQTSIPTRPSGFADSFTSVDGR. Residues 906 to 918 are compositionally biased toward low complexity; it reads ADDSGSSSSAYGS. Polar residues predominate over residues 919–928; that stretch reads KDNTQTSIPT.

It belongs to the protein kinase superfamily. Ser/Thr protein kinase family. As to expression, expressed in roots, leaves, stems, siliques and flowers.

Its subcellular location is the membrane. It carries out the reaction L-seryl-[protein] + ATP = O-phospho-L-seryl-[protein] + ADP + H(+). The enzyme catalyses L-threonyl-[protein] + ATP = O-phospho-L-threonyl-[protein] + ADP + H(+). Functionally, involved in auxin signal transduction and cell expansion and proliferation regulation. This Arabidopsis thaliana (Mouse-ear cress) protein is Receptor-like kinase TMK3.